We begin with the raw amino-acid sequence, 1272 residues long: Magnesium-chelatase subunit H (1272 aa).

This sequence belongs to the Mg-chelatase subunit H family.

The enzyme catalyses protoporphyrin IX + Mg(2+) + ATP + H2O = Mg-protoporphyrin IX + ADP + phosphate + 3 H(+). It participates in porphyrin-containing compound metabolism; bacteriochlorophyll biosynthesis (light-independent). Its function is as follows. Involved in bacteriochlorophyll pigment biosynthesis; introduces a magnesium ion into protoporphyrin IX to yield Mg-protoroporphyrin IX. This Chlorobaculum parvum (strain DSM 263 / NCIMB 8327) (Chlorobium vibrioforme subsp. thiosulfatophilum) protein is Magnesium-chelatase subunit H (bchH).